A 375-amino-acid chain; its full sequence is Chaperone protein DnaJ (375 aa).

The 66-residue stretch at 5–70 folds into the J domain; sequence GYYEVLGVSK…QKRQAYDQFG (66 aa). Residues 142-220 form a CR-type zinc finger; the sequence is GKEYKIEIPR…CKGEGLTEKR (79 aa). 8 residues coordinate Zn(2+): Cys-155, Cys-158, Cys-172, Cys-175, Cys-194, Cys-197, Cys-208, and Cys-211. 4 CXXCXGXG motif repeats span residues 155-162, 172-179, 194-201, and 208-215; these read CVDCTGSG, CPDCSGTG, CPRCKGKG, and CKTCKGEG.

It belongs to the DnaJ family. Homodimer. It depends on Zn(2+) as a cofactor.

Its subcellular location is the cytoplasm. Participates actively in the response to hyperosmotic and heat shock by preventing the aggregation of stress-denatured proteins and by disaggregating proteins, also in an autonomous, DnaK-independent fashion. Unfolded proteins bind initially to DnaJ; upon interaction with the DnaJ-bound protein, DnaK hydrolyzes its bound ATP, resulting in the formation of a stable complex. GrpE releases ADP from DnaK; ATP binding to DnaK triggers the release of the substrate protein, thus completing the reaction cycle. Several rounds of ATP-dependent interactions between DnaJ, DnaK and GrpE are required for fully efficient folding. Also involved, together with DnaK and GrpE, in the DNA replication of plasmids through activation of initiation proteins. This is Chaperone protein DnaJ from Leptospira biflexa serovar Patoc (strain Patoc 1 / Ames).